The chain runs to 123 residues: Protein Rev (123 aa).

Phosphoserine; by host CK2 occurs at positions 5 and 8. A homomultimerization region spans residues 18-26 (IIKILYQSN). Disordered regions lie at residues 24–49 (QSNPYPSPEGSRQARRNRRRRWRARQ) and 82–123 (TLDS…GAKN). The Nuclear localization signal and RNA-binding (RRE) signature appears at 34–50 (SRQARRNRRRRWRARQR). Basic residues predominate over residues 36 to 49 (QARRNRRRRWRARQ). A Nuclear export signal and binding to XPO1 motif is present at residues 73–84 (LPLPPIERLTLD). A compositionally biased stretch (polar residues) spans 97–112 (PQGTETGTGSPNTPEG).

Belongs to the HIV-1 REV protein family. In terms of assembly, homomultimer; when bound to the RRE. Multimeric assembly is essential for activity and may involve XPO1. Binds to human KPNB1, XPO1, TNPO1, RANBP5 and IPO7. Interacts with the viral Integrase. Interacts with human KHDRBS1. Interacts with human NAP1; this interaction decreases Rev multimerization and stimulates its activity. Interacts with human DEAD-box helicases DDX3 and DDX24; these interactions may serve for viral RNA export to the cytoplasm and packaging, respectively. Interacts with human PSIP1; this interaction may inhibit HIV-1 DNA integration by promoting dissociation of the Integrase-LEDGF/p75 complex. Post-translationally, asymmetrically arginine dimethylated at one site by host PRMT6. Methylation impairs the RNA-binding activity and export of viral RNA from the nucleus to the cytoplasm. Phosphorylated by protein kinase CK2. Presence of, and maybe binding to the N-terminus of the regulatory beta subunit of CK2 is necessary for CK2-mediated Rev's phosphorylation.

It is found in the host nucleus. The protein localises to the host nucleolus. Its subcellular location is the host cytoplasm. Its function is as follows. Escorts unspliced or incompletely spliced viral pre-mRNAs (late transcripts) out of the nucleus of infected cells. These pre-mRNAs carry a recognition sequence called Rev responsive element (RRE) located in the env gene, that is not present in fully spliced viral mRNAs (early transcripts). This function is essential since most viral proteins are translated from unspliced or partially spliced pre-mRNAs which cannot exit the nucleus by the pathway used by fully processed cellular mRNAs. Rev itself is translated from a fully spliced mRNA that readily exits the nucleus. Rev's nuclear localization signal (NLS) binds directly to KPNB1/Importin beta-1 without previous binding to KPNA1/Importin alpha-1. KPNB1 binds to the GDP bound form of RAN (Ran-GDP) and targets Rev to the nucleus. In the nucleus, the conversion from Ran-GDP to Ran-GTP dissociates Rev from KPNB1 and allows Rev's binding to the RRE in viral pre-mRNAs. Rev multimerization on the RRE via cooperative assembly exposes its nuclear export signal (NES) to the surface. Rev can then form a complex with XPO1/CRM1 and Ran-GTP, leading to nuclear export of the complex. Conversion from Ran-GTP to Ran-GDP mediates dissociation of the Rev/RRE/XPO1/RAN complex, so that Rev can return to the nucleus for a subsequent round of export. Beside KPNB1, also seems to interact with TNPO1/Transportin-1, RANBP5/IPO5 and IPO7/RANBP7 for nuclear import. The nucleoporin-like HRB/RIP is an essential cofactor that probably indirectly interacts with Rev to release HIV RNAs from the perinuclear region to the cytoplasm. This is Protein Rev from Simian immunodeficiency virus (isolate MB66) (SIV-cpz).